We begin with the raw amino-acid sequence, 273 residues long: Polyamine aminopropyltransferase (273 aa).

A PABS domain is found at 5–238 (ENWFSERYSD…GFWSFTVASP (234 aa)). Gln34 provides a ligand contact to S-methyl-5'-thioadenosine. Residues His65 and Asp90 each coordinate spermidine. Residues Glu109 and 140-141 (DG) each bind S-methyl-5'-thioadenosine. The active-site Proton acceptor is the Asp158. 158–161 (DSTD) provides a ligand contact to spermidine. An S-methyl-5'-thioadenosine-binding site is contributed by Pro165.

The protein belongs to the spermidine/spermine synthase family. As to quaternary structure, homodimer or homotetramer.

Its subcellular location is the cytoplasm. It carries out the reaction S-adenosyl 3-(methylsulfanyl)propylamine + putrescine = S-methyl-5'-thioadenosine + spermidine + H(+). It functions in the pathway amine and polyamine biosynthesis; spermidine biosynthesis; spermidine from putrescine: step 1/1. In terms of biological role, catalyzes the irreversible transfer of a propylamine group from the amino donor S-adenosylmethioninamine (decarboxy-AdoMet) to putrescine (1,4-diaminobutane) to yield spermidine. The chain is Polyamine aminopropyltransferase from Thermoplasma acidophilum (strain ATCC 25905 / DSM 1728 / JCM 9062 / NBRC 15155 / AMRC-C165).